The chain runs to 484 residues: Glutamyl-tRNA(Gln) amidotransferase subunit B, mitochondrial (484 aa).

The protein belongs to the GatB/GatE family. GatB subfamily. Subunit of the heterotrimeric GatFAB amidotransferase (AdT) complex, composed of A, B and F subunits.

Its subcellular location is the mitochondrion. The enzyme catalyses L-glutamyl-tRNA(Gln) + L-glutamine + ATP + H2O = L-glutaminyl-tRNA(Gln) + L-glutamate + ADP + phosphate + H(+). Allows the formation of correctly charged Gln-tRNA(Gln) through the transamidation of misacylated Glu-tRNA(Gln) in the mitochondria. The reaction takes place in the presence of glutamine and ATP through an activated gamma-phospho-Glu-tRNA(Gln). The protein is Glutamyl-tRNA(Gln) amidotransferase subunit B, mitochondrial of Candida tropicalis (strain ATCC MYA-3404 / T1) (Yeast).